Consider the following 153-residue polypeptide: Protein SREK1IP1 (153 aa).

A CCHC-type zinc finger spans residues 13-30 (AGCRKCGYPGHLTFECRN). Positions 44 to 153 (VSSTSSEDSD…SPNRSEVTKK (110 aa)) are disordered. The residue at position 52 (S52) is a Phosphoserine. Basic and acidic residues predominate over residues 66-84 (QEKRINEEEEKKKEKSREK). A compositionally biased stretch (basic residues) spans 85–94 (IKLKKKRKRS). 2 positions are modified to phosphoserine: S96 and S97. Residues 106-141 (QKKQKYQKKEKKKEKKNKSKKGKHHKKEKKKRKKEK) show a composition bias toward basic residues.

As to quaternary structure, interacts with SREK1/SFRS12.

Its function is as follows. Possible splicing regulator involved in the control of cellular survival. The sequence is that of Protein SREK1IP1 (Srek1ip1) from Rattus norvegicus (Rat).